A 97-amino-acid chain; its full sequence is CLAVATA3/ESR (CLE)-related protein ESR2-C (97 aa).

The interval 1 to 97 (TRTDDKPGVN…IGPPPFLDRY (97 aa)) is disordered. Hydroxyproline occurs at positions 47 and 50. Residue proline 50 is glycosylated (O-linked (Ara...) hydroxyproline).

The protein belongs to the CLV3/ESR signal peptide family. The O-glycosylation (arabinosylation) of the hydroxyproline Pro-50 enhances binding affinity of the ESR2Cp peptide for its receptor. In terms of tissue distribution, seed endosperm.

It localises to the secreted. The protein localises to the extracellular space. Its function is as follows. Extracellular signal peptide that regulates cell fate. This chain is CLAVATA3/ESR (CLE)-related protein ESR2-C, found in Zea mays (Maize).